Here is a 403-residue protein sequence, read N- to C-terminus: S-adenosylmethionine synthase (403 aa).

Residue His-17 coordinates ATP. Asp-19 provides a ligand contact to Mg(2+). Glu-45 serves as a coordination point for K(+). L-methionine contacts are provided by Glu-58 and Gln-104. The flexible loop stretch occupies residues Gln-104 to Thr-114. ATP-binding positions include Asp-179 to Lys-181, Lys-250 to Phe-251, Asp-259, Arg-265 to Lys-266, Ala-282, and Lys-286. L-methionine is bound at residue Asp-259. Position 290 (Lys-290) interacts with L-methionine.

Belongs to the AdoMet synthase family. Homotetramer; dimer of dimers. Mg(2+) serves as cofactor. The cofactor is K(+).

It localises to the cytoplasm. It carries out the reaction L-methionine + ATP + H2O = S-adenosyl-L-methionine + phosphate + diphosphate. It functions in the pathway amino-acid biosynthesis; S-adenosyl-L-methionine biosynthesis; S-adenosyl-L-methionine from L-methionine: step 1/1. Its function is as follows. Catalyzes the formation of S-adenosylmethionine (AdoMet) from methionine and ATP. The overall synthetic reaction is composed of two sequential steps, AdoMet formation and the subsequent tripolyphosphate hydrolysis which occurs prior to release of AdoMet from the enzyme. The sequence is that of S-adenosylmethionine synthase from Mycobacterium leprae (strain Br4923).